Reading from the N-terminus, the 273-residue chain is uncharacterized protein (273 aa).

The helical transmembrane segment at 7 to 27 (LTLGICLVLLIILIVGYVIMT) threads the bilayer.

It belongs to the staphylococcal tandem lipoprotein family.

The protein resides in the cell membrane. This is an uncharacterized protein from Staphylococcus aureus (strain MSSA476).